The primary structure comprises 433 residues: Serine/threonine-protein phosphatase 2A activator 2 (433 aa).

Residues 1–10 show a composition bias toward pro residues; the sequence is MTSQAPPQPA. 2 disordered regions span residues 1-67 and 367-400; these read MTSQ…NWTF and SMSE…GTGW. Residues 11 to 23 are compositionally biased toward low complexity; that stretch reads SSPGVAAPAAASS. The span at 45 to 59 shows a compositional bias: pro residues; sequence NPTPIPETPALPTPP. The span at 367 to 382 shows a compositional bias: acidic residues; that stretch reads SMSEDTGAGDEADVED. The segment covering 383–396 has biased composition (basic and acidic residues); the sequence is DPHAGHDHTGKAHD.

The protein belongs to the PTPA-type PPIase family.

The protein localises to the cytoplasm. It catalyses the reaction [protein]-peptidylproline (omega=180) = [protein]-peptidylproline (omega=0). In terms of biological role, PPIases accelerate the folding of proteins. It catalyzes the cis-trans isomerization of proline imidic peptide bonds in oligopeptides. Acts as a regulatory subunit for PP2A-like phosphatases modulating their activity or substrate specificity, probably by inducing a conformational change in the catalytic subunit, a direct target of the PPIase. Can reactivate inactive phosphatase PP2A-phosphatase methylesterase complexes (PP2Ai) in presence of ATP and Mg(2+) by dissociating the inactive form from the complex. This chain is Serine/threonine-protein phosphatase 2A activator 2 (RRD2), found in Gibberella zeae (strain ATCC MYA-4620 / CBS 123657 / FGSC 9075 / NRRL 31084 / PH-1) (Wheat head blight fungus).